Reading from the N-terminus, the 87-residue chain is uncharacterized protein (87 aa).

The protein belongs to the YlmC/YmxH family.

This is an uncharacterized protein from Clostridium acetobutylicum (strain ATCC 824 / DSM 792 / JCM 1419 / IAM 19013 / LMG 5710 / NBRC 13948 / NRRL B-527 / VKM B-1787 / 2291 / W).